The sequence spans 417 residues: Argininosuccinate synthase (417 aa).

Ala8–Ser16 serves as a coordination point for ATP. Tyr87 provides a ligand contact to L-citrulline. Gly117 contributes to the ATP binding site. Residues Thr119, Asn123, and Asp124 each contribute to the L-aspartate site. Asn123 lines the L-citrulline pocket. Positions 127, 175, 259, and 271 each coordinate L-citrulline.

It belongs to the argininosuccinate synthase family. Type 1 subfamily. As to quaternary structure, homotetramer.

The protein localises to the cytoplasm. It carries out the reaction L-citrulline + L-aspartate + ATP = 2-(N(omega)-L-arginino)succinate + AMP + diphosphate + H(+). Its pathway is amino-acid biosynthesis; L-arginine biosynthesis; L-arginine from L-ornithine and carbamoyl phosphate: step 2/3. This is Argininosuccinate synthase from Clavibacter sepedonicus (Clavibacter michiganensis subsp. sepedonicus).